The chain runs to 149 residues: Deoxyuridine 5'-triphosphate nucleotidohydrolase (149 aa).

Residues arginine 68–glycine 70, asparagine 81, leucine 85–aspartate 87, and methionine 95 each bind substrate.

This sequence belongs to the dUTPase family. The cofactor is Mg(2+).

It carries out the reaction dUTP + H2O = dUMP + diphosphate + H(+). The protein operates within pyrimidine metabolism; dUMP biosynthesis; dUMP from dCTP (dUTP route): step 2/2. In terms of biological role, this enzyme is involved in nucleotide metabolism: it produces dUMP, the immediate precursor of thymidine nucleotides and it decreases the intracellular concentration of dUTP so that uracil cannot be incorporated into DNA. This Methylibium petroleiphilum (strain ATCC BAA-1232 / LMG 22953 / PM1) protein is Deoxyuridine 5'-triphosphate nucleotidohydrolase.